The primary structure comprises 600 residues: MCGIVGFIGEQDAKEILLKGLEKLEYRGYDSAGIAVQAENGVVVYKEKGRIAKLREIVDENVAASVGIGHTRWATHGVPSKVNAHPHQSTSKRFTLVHNGVIENYELVKKEYLQDVTFVSETDTEVIVQLMEQQVSTGLSVEEAFRNTLSLLHGSYAIGLLDAENPNMIYVAKNKSPLLVGVGDNFNVVASDAMAMLQVTDQFIELMDKEIVIVMKESITIKNLQGETIERAPFTAELDASDIEKGTYPHFMLKEIDEQPLVIRNIIQKYQDENGEIELDQDIRNAILDSDRIYIIACGTSYHAGLVGKQFIEKFAKMPVEVHVASEFSYNMPLLTERPFFIYISQSGETADSRAVLVQTNEMGHKALTITNVPGSTLSREADYTLPLYAGPEIAVASTKAYTAQLAVLSILAADIAKAKGEVLDFDLTHELGLVANAMVQLCDQKEEMDALAKQFLATTRNCFFIGRSVDFYVGLEGALKLKEISYIQAEGFAGGELKHGTIALIENGTPVIALATQEHVNLGIRGNVKEVVARGANPCIISMKGLEMEGDSFVLPAVHEALAPLVAVIPLQLISYYAALHRECDVDKPRNLAKSVTVE.

Cys-2 acts as the Nucleophile; for GATase activity in catalysis. Residues 2–217 (CGIVGFIGEQ…DKEIVIVMKE (216 aa)) enclose the Glutamine amidotransferase type-2 domain. 2 consecutive SIS domains span residues 283-422 (IRNA…AKGE) and 452-590 (LAKQ…VDKP). Lys-595 serves as the catalytic For Fru-6P isomerization activity.

As to quaternary structure, homodimer.

Its subcellular location is the cytoplasm. It catalyses the reaction D-fructose 6-phosphate + L-glutamine = D-glucosamine 6-phosphate + L-glutamate. In terms of biological role, catalyzes the first step in hexosamine metabolism, converting fructose-6P into glucosamine-6P using glutamine as a nitrogen source. The protein is Glutamine--fructose-6-phosphate aminotransferase [isomerizing] of Bacillus thuringiensis subsp. konkukian (strain 97-27).